Here is a 128-residue protein sequence, read N- to C-terminus: Ribonuclease P protein component (128 aa).

The protein belongs to the RnpA family. As to quaternary structure, consists of a catalytic RNA component (M1 or rnpB) and a protein subunit.

The catalysed reaction is Endonucleolytic cleavage of RNA, removing 5'-extranucleotides from tRNA precursor.. Its function is as follows. RNaseP catalyzes the removal of the 5'-leader sequence from pre-tRNA to produce the mature 5'-terminus. It can also cleave other RNA substrates such as 4.5S RNA. The protein component plays an auxiliary but essential role in vivo by binding to the 5'-leader sequence and broadening the substrate specificity of the ribozyme. This is Ribonuclease P protein component from Prochlorococcus marinus (strain MIT 9215).